The sequence spans 291 residues: F-box protein PP2-A12 (291 aa).

Positions 25-71 (KPGLGDLPEACVAIIVENLDPVEICRFSKLNRAFRGASWADCVWESK) constitute an F-box domain.

This chain is F-box protein PP2-A12 (P2A12), found in Arabidopsis thaliana (Mouse-ear cress).